A 118-amino-acid chain; its full sequence is 5-hydroxyisourate hydrolase (118 aa).

3 residues coordinate substrate: His7, Arg46, and Tyr115.

Belongs to the transthyretin family. 5-hydroxyisourate hydrolase subfamily. As to quaternary structure, homotetramer.

It carries out the reaction 5-hydroxyisourate + H2O = 5-hydroxy-2-oxo-4-ureido-2,5-dihydro-1H-imidazole-5-carboxylate + H(+). Its function is as follows. Catalyzes the hydrolysis of 5-hydroxyisourate (HIU) to 2-oxo-4-hydroxy-4-carboxy-5-ureidoimidazoline (OHCU). This Brucella melitensis biotype 1 (strain ATCC 23456 / CCUG 17765 / NCTC 10094 / 16M) protein is 5-hydroxyisourate hydrolase.